We begin with the raw amino-acid sequence, 248 residues long: 2,3-bisphosphoglycerate-dependent phosphoglycerate mutase (248 aa).

Substrate-binding positions include 8 to 15 (RHGESTWN), 21 to 22 (TG), R60, 87 to 90 (ERHY), K98, 114 to 115 (RR), and 183 to 184 (GN). H9 functions as the Tele-phosphohistidine intermediate in the catalytic mechanism. The Proton donor/acceptor role is filled by E87.

The protein belongs to the phosphoglycerate mutase family. BPG-dependent PGAM subfamily. In terms of assembly, homodimer.

The catalysed reaction is (2R)-2-phosphoglycerate = (2R)-3-phosphoglycerate. It functions in the pathway carbohydrate degradation; glycolysis; pyruvate from D-glyceraldehyde 3-phosphate: step 3/5. Its function is as follows. Catalyzes the interconversion of 2-phosphoglycerate and 3-phosphoglycerate. This Burkholderia vietnamiensis (strain G4 / LMG 22486) (Burkholderia cepacia (strain R1808)) protein is 2,3-bisphosphoglycerate-dependent phosphoglycerate mutase.